The chain runs to 61 residues: Large ribosomal subunit protein uL30 (61 aa).

This sequence belongs to the universal ribosomal protein uL30 family. In terms of assembly, part of the 50S ribosomal subunit.

This Mycolicibacterium gilvum (strain PYR-GCK) (Mycobacterium gilvum (strain PYR-GCK)) protein is Large ribosomal subunit protein uL30.